The following is a 169-amino-acid chain: S-ribosylhomocysteine lyase (169 aa).

3 residues coordinate Fe cation: His-54, His-58, and Cys-128.

It belongs to the LuxS family. Homodimer. It depends on Fe cation as a cofactor.

The enzyme catalyses S-(5-deoxy-D-ribos-5-yl)-L-homocysteine = (S)-4,5-dihydroxypentane-2,3-dione + L-homocysteine. In terms of biological role, involved in the synthesis of autoinducer 2 (AI-2) which is secreted by bacteria and is used to communicate both the cell density and the metabolic potential of the environment. The regulation of gene expression in response to changes in cell density is called quorum sensing. Catalyzes the transformation of S-ribosylhomocysteine (RHC) to homocysteine (HC) and 4,5-dihydroxy-2,3-pentadione (DPD). The chain is S-ribosylhomocysteine lyase from Shewanella sp. (strain MR-7).